The chain runs to 120 residues: Small ribosomal subunit protein bS16 (120 aa).

The tract at residues K84–A120 is disordered. Low complexity predominate over residues R103–A120.

This sequence belongs to the bacterial ribosomal protein bS16 family.

This Beijerinckia indica subsp. indica (strain ATCC 9039 / DSM 1715 / NCIMB 8712) protein is Small ribosomal subunit protein bS16.